Here is a 159-residue protein sequence, read N- to C-terminus: 2-C-methyl-D-erythritol 2,4-cyclodiphosphate synthase (159 aa).

A divalent metal cation-binding residues include D11 and H13. 4-CDP-2-C-methyl-D-erythritol 2-phosphate is bound by residues 11–13 (DVH) and 37–38 (HS). H45 contacts a divalent metal cation. 4-CDP-2-C-methyl-D-erythritol 2-phosphate is bound by residues 59-61 (DIG) and 64-68 (FPDSD).

The protein belongs to the IspF family. In terms of assembly, homotrimer. The cofactor is a divalent metal cation.

The catalysed reaction is 4-CDP-2-C-methyl-D-erythritol 2-phosphate = 2-C-methyl-D-erythritol 2,4-cyclic diphosphate + CMP. It functions in the pathway isoprenoid biosynthesis; isopentenyl diphosphate biosynthesis via DXP pathway; isopentenyl diphosphate from 1-deoxy-D-xylulose 5-phosphate: step 4/6. In terms of biological role, involved in the biosynthesis of isopentenyl diphosphate (IPP) and dimethylallyl diphosphate (DMAPP), two major building blocks of isoprenoid compounds. Catalyzes the conversion of 4-diphosphocytidyl-2-C-methyl-D-erythritol 2-phosphate (CDP-ME2P) to 2-C-methyl-D-erythritol 2,4-cyclodiphosphate (ME-CPP) with a corresponding release of cytidine 5-monophosphate (CMP). The polypeptide is 2-C-methyl-D-erythritol 2,4-cyclodiphosphate synthase (Solibacter usitatus (strain Ellin6076)).